The chain runs to 678 residues: Penicillin-binding protein activator LpoA (678 aa).

The signal sequence occupies residues 1 to 26; it reads MVPSTFSRLKAARCLPVVLAALIFAG. Cysteine 27 carries the N-palmitoyl cysteine lipid modification. Residue cysteine 27 is the site of S-diacylglycerol cysteine attachment. Positions 300-310 are enriched in low complexity; it reads AADVAEQPQPQ. Disordered regions lie at residues 300–340 and 496–528; these read AADV…PVSA and ALTGSPITPRATTDSGMTTNNPTLQTTPTDDQF. The segment covering 311–327 has biased composition (polar residues); the sequence is TADSVASPAQASVSDLT. 2 stretches are compositionally biased toward low complexity: residues 330 to 340 and 513 to 528; these read QPAAQPVPVSA and TTNNPTLQTTPTDDQF.

The protein belongs to the LpoA family. In terms of assembly, interacts with PBP1a.

It is found in the cell outer membrane. Its function is as follows. Regulator of peptidoglycan synthesis that is essential for the function of penicillin-binding protein 1A (PBP1a). The chain is Penicillin-binding protein activator LpoA from Shigella flexneri serotype X (strain 2002017).